The following is a 295-amino-acid chain: 4-hydroxy-tetrahydrodipicolinate synthase (295 aa).

Thr-47 contacts pyruvate. The active-site Proton donor/acceptor is Tyr-135. The active-site Schiff-base intermediate with substrate is Lys-163. Ile-206 serves as a coordination point for pyruvate.

The protein belongs to the DapA family. As to quaternary structure, homodimer.

The protein resides in the cytoplasm. It catalyses the reaction L-aspartate 4-semialdehyde + pyruvate = (2S,4S)-4-hydroxy-2,3,4,5-tetrahydrodipicolinate + H2O + H(+). The protein operates within amino-acid biosynthesis; L-lysine biosynthesis via DAP pathway; (S)-tetrahydrodipicolinate from L-aspartate: step 3/4. Catalyzes the condensation of (S)-aspartate-beta-semialdehyde [(S)-ASA] and pyruvate to 4-hydroxy-tetrahydrodipicolinate (HTPA). The polypeptide is 4-hydroxy-tetrahydrodipicolinate synthase (Staphylococcus aureus (strain MSSA476)).